We begin with the raw amino-acid sequence, 311 residues long: CAAX prenyl protease 2 (311 aa).

The next 3 helical transmembrane spans lie at 14-34, 51-71, and 94-114; these read VATCVAMALFYVLILYVPTVI, FICAAICTVASLVFTAFILPI, and VVYPLLLTSLVYAGSLVLKLF. Glu-164 functions as the Proton donor/acceptor in the catalytic mechanism. The helical transmembrane segment at 173–193 threads the bilayer; sequence IPLLLCAGFRINTAIFLCPVL. Catalysis depends on His-198, which acts as the Proton donor/acceptor. The next 3 helical transmembrane spans lie at 219 to 239, 244 to 264, and 268 to 288; these read IVGLQLGYTVIFGAYASFLFI, LAAPLFAHIFCNYMGLPVLYA, and GLVSAAFLGGVVGFVLLLFPL.

Belongs to the peptidase U48 family. As to expression, expressed in seeds, stems, leaves, flowers and siliques.

It localises to the endoplasmic reticulum membrane. It carries out the reaction Hydrolyzes the peptide bond -P2-(S-farnesyl or geranylgeranyl)C-P1'-P2'-P3'-COOH where P1' and P2' are amino acids with aliphatic sidechains and P3' is any C-terminal residue.. Its activity is regulated as follows. Inhibited in vitro by L-1-tosylamido-2-phenylethyl chloromethyl ketone (TPCK) and N-ethylmaleimide, but not by EDTA. Protease involved in the processing of a variety of prenylated proteins containing the C-terminal CAAX motif, where C is a cysteine modified with an isoprenoid lipid, A is an aliphatic amino acid and X is any C-terminal amino acid. Proteolytically removes the C-terminal three residues of farnesylated and geranylated proteins, leaving the prenylated cysteine as the new C-terminus. The substrate specificity is only partially overlapping with that of FACE1. CAAX processing is likely required for subcellular targeting of prenylated proteins to the plasma membrane. This is CAAX prenyl protease 2 (FACE2) from Arabidopsis thaliana (Mouse-ear cress).